A 259-amino-acid chain; its full sequence is MNWLEAFILGIIQGLTEFLPISSTGHLYLGRHLFQLDEAGLFLDTMLHIGTLLAVFIYYKKEFIYLIKNPFSKLMLLLIVGTIPAVVIGLLFKDFFEDISKTGITIGWEFLVTGFFLYMADKQKNGRKKMDDITYKDAFIIGSFQAAAIFPAISRSGMTIVAALWRKLDRETAAYFSFLLSTPAIVGAIILQFVDVFQGKAESISSTSLIVGTLSAAFFGYIAVSWMIQYLKRHSLKVFAYYVWGLGILILTLQFTDVF.

The next 8 helical transmembrane spans lie at 1-21 (MNWLEAFILGIIQGLTEFLPI), 39-59 (AGLFLDTMLHIGTLLAVFIYY), 71-91 (FSKLMLLLIVGTIPAVVIGLL), 99-119 (ISKTGITIGWEFLVTGFFLYM), 133-153 (ITYKDAFIIGSFQAAAIFPAI), 174-194 (AYFSFLLSTPAIVGAIILQFV), 208-228 (SLIVGTLSAAFFGYIAVSWMI), and 239-259 (FAYYVWGLGILILTLQFTDVF).

It belongs to the UppP family.

The protein resides in the cell membrane. It catalyses the reaction di-trans,octa-cis-undecaprenyl diphosphate + H2O = di-trans,octa-cis-undecaprenyl phosphate + phosphate + H(+). Its function is as follows. Catalyzes the dephosphorylation of undecaprenyl diphosphate (UPP). Confers resistance to bacitracin. This chain is Undecaprenyl-diphosphatase 4, found in Bacillus cereus (strain ZK / E33L).